A 313-amino-acid polypeptide reads, in one-letter code: Ubiquitin-conjugating enzyme E2 Z (313 aa).

The region spanning 58–212 (QCVLRIKRDI…IRHETIRVAV (155 aa)) is the UBC core domain. Residue Cys-147 is the Glycyl thioester intermediate of the active site. The tract at residues 283–313 (VREKHRKETVDIDSDSSSSETETDTQGSSNP) is disordered. Residues 297–313 (DSSSSETETDTQGSSNP) are compositionally biased toward low complexity.

It belongs to the ubiquitin-conjugating enzyme family.

The protein localises to the cytoplasm. It is found in the nucleus. It catalyses the reaction S-ubiquitinyl-[E1 ubiquitin-activating enzyme]-L-cysteine + [E2 ubiquitin-conjugating enzyme]-L-cysteine = [E1 ubiquitin-activating enzyme]-L-cysteine + S-ubiquitinyl-[E2 ubiquitin-conjugating enzyme]-L-cysteine.. It participates in protein modification; protein ubiquitination. In terms of biological role, catalyzes the covalent attachment of ubiquitin to other proteins. May be involved in apoptosis regulation. This is Ubiquitin-conjugating enzyme E2 Z (ube2z) from Xenopus tropicalis (Western clawed frog).